A 314-amino-acid polypeptide reads, in one-letter code: 2-oxo-3-(phosphooxy)propyl 3-oxoalkanoate synthase (314 aa).

The protein belongs to the AfsA family.

The catalysed reaction is a medium-chain 3-oxoacyl-[ACP] + dihydroxyacetone phosphate = a (4-alkanoyl-5-oxo-2,5-dihydrofuran-3-yl)methyl phosphate + holo-[ACP] + H2O. Involved of the biosynthesis of S.coelicolor butanolide 1 (SCB1), a gamma-butyrolactone that triggers antibiotic production. This chain is 2-oxo-3-(phosphooxy)propyl 3-oxoalkanoate synthase, found in Streptomyces coelicolor (strain ATCC BAA-471 / A3(2) / M145).